A 394-amino-acid chain; its full sequence is F-box protein At2g17830 (394 aa).

One can recognise an F-box domain in the interval 1 to 47; that stretch reads MAIMSDLPRDLLAEILSRVPLASLRSVRFTCKKWNDLSKDRSFLKKQ.

The sequence is that of F-box protein At2g17830 from Arabidopsis thaliana (Mouse-ear cress).